The following is a 164-amino-acid chain: Lipoprotein signal peptidase (164 aa).

Helical transmembrane passes span 12–32 (WLWLVVIVLIIDLGSKYLILQ), 42–62 (LFPSLNLHASAYYGAAFSFLA), 70–90 (WFFAGIAIGISVLLAVMMYRS), and 102–122 (ALIIGGALGNLFDRLWHGFVV). Catalysis depends on residues D123 and D141. The helical transmembrane segment at 137 to 157 (FNLADTAICVGAALIVLEGFL) threads the bilayer.

This sequence belongs to the peptidase A8 family.

Its subcellular location is the cell inner membrane. It carries out the reaction Release of signal peptides from bacterial membrane prolipoproteins. Hydrolyzes -Xaa-Yaa-Zaa-|-(S,diacylglyceryl)Cys-, in which Xaa is hydrophobic (preferably Leu), and Yaa (Ala or Ser) and Zaa (Gly or Ala) have small, neutral side chains.. Its pathway is protein modification; lipoprotein biosynthesis (signal peptide cleavage). Its function is as follows. This protein specifically catalyzes the removal of signal peptides from prolipoproteins. In Shigella flexneri serotype 5b (strain 8401), this protein is Lipoprotein signal peptidase.